We begin with the raw amino-acid sequence, 156 residues long: uncharacterized protein (156 aa).

Residues 1-22 (MFGKVSSLLVFASFLIIQGAFA) form the signal peptide. A lipid anchor (GPI-anchor amidated serine) is attached at Ser-129. Positions 130–156 (GSPVRFSKSSLLIVSLLSIAAFAALVL) are cleaved as a propeptide — removed in mature form.

It localises to the cell membrane. This is an uncharacterized protein from Schizosaccharomyces pombe (strain 972 / ATCC 24843) (Fission yeast).